The following is a 340-amino-acid chain: Mitochondrial carrier protein CoAc1 (340 aa).

6 helical membrane passes run 22–42 (ALDL…AGAF), 85–105 (FYKG…LHYM), 130–147 (LLAG…TYPL), 199–219 (GVGP…YIYE), 237–257 (LSCG…LDVV), and 297–317 (FAGL…GFTT). 3 Solcar repeats span residues 27–113 (PVYA…YRCW), 124–224 (TGPV…LKSQ), and 231–324 (DSVI…MKAL).

This sequence belongs to the mitochondrial carrier (TC 2.A.29) family. Expressed throughout the plant.

It is found in the mitochondrion inner membrane. In terms of biological role, required for the accumulation of coenzyme A in the mitochondrial matrix. In Zea mays (Maize), this protein is Mitochondrial carrier protein CoAc1.